The sequence spans 111 residues: Putative pterin-4-alpha-carbinolamine dehydratase (111 aa).

It belongs to the pterin-4-alpha-carbinolamine dehydratase family.

It carries out the reaction (4aS,6R)-4a-hydroxy-L-erythro-5,6,7,8-tetrahydrobiopterin = (6R)-L-erythro-6,7-dihydrobiopterin + H2O. The protein is Putative pterin-4-alpha-carbinolamine dehydratase of Chlorobaculum tepidum (strain ATCC 49652 / DSM 12025 / NBRC 103806 / TLS) (Chlorobium tepidum).